The primary structure comprises 91 residues: Dynein light chain 1, cytoplasmic (91 aa).

This sequence belongs to the dynein light chain family. In terms of assembly, homodimer. Cytoplasmic dynein consists of two catalytic heavy chains (HCs) and a number of non-catalytic subunits which present intermediate chains (ICs), light intermediate chains (LICs) and light chains (LCs). Component of the nuclear pore complex (NPC). NPC constitutes the exclusive means of nucleocytoplasmic transport. NPCs allow the passive diffusion of ions and small molecules and the active, nuclear transport receptor-mediated bidirectional transport of macromolecules such as proteins, RNAs, ribonucleoparticles (RNPs), and ribosomal subunits across the nuclear envelope. Due to its 8-fold rotational symmetry, all subunits are present with 8 copies or multiples thereof.

The protein localises to the cytoplasm. Its subcellular location is the cytoskeleton. The protein resides in the nucleus. It localises to the nuclear pore complex. In terms of biological role, acts as one of several non-catalytic accessory components of the cytoplasmic dynein complex that are thought to be involved in linking dynein to cargos and to adapter proteins that regulate dynein function. Cytoplasmic dynein 1 acts as a motor for the intracellular retrograde motility of vesicles and organelles along microtubules. May play a role in changing or maintaining the spatial distribution of cytoskeletal structures. Also a component of the nuclear pore complex. This chain is Dynein light chain 1, cytoplasmic (DYN2), found in Debaryomyces hansenii (strain ATCC 36239 / CBS 767 / BCRC 21394 / JCM 1990 / NBRC 0083 / IGC 2968) (Yeast).